The sequence spans 129 residues: Probable protein cornichon homolog 2 (129 aa).

2 helical membrane passes run 45 to 65 (FIVQ…FMTL) and 105 to 125 (LAYI…SALD).

Belongs to the cornichon family.

It localises to the membrane. The chain is Probable protein cornichon homolog 2 from Arabidopsis thaliana (Mouse-ear cress).